The following is a 272-amino-acid chain: Acidic leucine-rich nuclear phosphoprotein 32-related protein 2 (272 aa).

3 LRR repeats span residues 57 to 78, 79 to 100, and 106 to 127; these read SLEELSVAGARLSSLAGLPRLP, ALRRLSLPDNRLSGAASLAAVA, and TLRHLDLGNNRFADVAELAPLA. The region spanning 139–184 is the LRRCT domain; sequence CPVTKAKGYRDKVFALIPSLKFLDGMDAEGNDCLDSDDEEDEEEDE. A disordered region spans residues 163-272; that stretch reads GMDAEGNDCL…DSEDDANGDN (110 aa). Residues 164 to 241 are compositionally biased toward acidic residues; sequence MDAEGNDCLD…DEAGADEEDE (78 aa). Residues 248 to 257 show a composition bias toward polar residues; it reads SKGSSGSAQP.

The protein belongs to the ANP32 family.

This Oryza sativa subsp. japonica (Rice) protein is Acidic leucine-rich nuclear phosphoprotein 32-related protein 2.